The following is a 256-amino-acid chain: Small ribosomal subunit protein eS1 (256 aa).

Residues 1-18 (MAVGKNKRLSKGKKGLKK) are compositionally biased toward basic residues. Residues 1–20 (MAVGKNKRLSKGKKGLKKRT) are disordered. Ala2 carries the N-acetylalanine; partial modification.

This sequence belongs to the eukaryotic ribosomal protein eS1 family. In terms of assembly, component of the small ribosomal subunit. Mature ribosomes consist of a small (40S) and a large (60S) subunit. The 40S subunit contains about 33 different proteins and 1 molecule of RNA (18S). The 60S subunit contains about 49 different proteins and 3 molecules of RNA (25S, 5.8S and 5S).

The protein localises to the cytoplasm. In Talaromyces marneffei (strain ATCC 18224 / CBS 334.59 / QM 7333) (Penicillium marneffei), this protein is Small ribosomal subunit protein eS1 (rps1).